We begin with the raw amino-acid sequence, 295 residues long: THO complex subunit 4C (295 aa).

Residues 1–67 (MSDALNMTLD…GPLAVNTRPS (67 aa)) form a disordered region. The residue at position 2 (Ser2) is an N-acetylserine. Basic and acidic residues predominate over residues 11–22 (EIVKKSKSERSA). The segment covering 38 to 55 (GRGGPNGVVGGGRGGGPV) has biased composition (gly residues). The 78-residue stretch at 107–184 (TTVYITNLDQ…RPMKLEILGG (78 aa)) folds into the RRM domain. The tract at residues 212-295 (QGVRGGRVGR…SYHAEAMNIS (84 aa)) is disordered. Gly residues-rich tracts occupy residues 213 to 227 (GVRGGRVGRGRGSGP) and 242 to 267 (VTAGRGGFRGRGRGNGGGRGNKSGGR). Over residues 271–288 (KPVEKSAADLDKDLESYH) the composition is skewed to basic and acidic residues.

The protein belongs to the ALYREF family. In terms of assembly, interacts with PARP1.

The protein resides in the nucleus. It is found in the nucleoplasm. It localises to the nucleolus. Export adapter involved in nuclear export of spliced and unspliced mRNA. The polypeptide is THO complex subunit 4C (Arabidopsis thaliana (Mouse-ear cress)).